The chain runs to 281 residues: Aldo-keto reductase MAP_3007 (281 aa).

Y56 functions as the Proton donor in the catalytic mechanism. NADPH contacts are provided by L196, I234, R236, S237, A238, S245, and R272.

It belongs to the aldo/keto reductase family.

The sequence is that of Aldo-keto reductase MAP_3007 from Mycolicibacterium paratuberculosis (strain ATCC BAA-968 / K-10) (Mycobacterium paratuberculosis).